Consider the following 126-residue polypeptide: Large ribosomal subunit protein uL14 (126 aa).

It belongs to the universal ribosomal protein uL14 family. Part of the 50S ribosomal subunit. Forms a cluster with proteins L3 and L19. In the 70S ribosome, L14 and L19 interact and together make contacts with the 16S rRNA in bridges B5 and B8.

Binds to 23S rRNA. Forms part of two intersubunit bridges in the 70S ribosome. The chain is Large ribosomal subunit protein uL14 from Persephonella marina (strain DSM 14350 / EX-H1).